Reading from the N-terminus, the 334-residue chain is Putative binding protein YtlA (334 aa).

An N-terminal signal peptide occupies residues Met-1–Ala-23. Cys-24 carries N-palmitoyl cysteine lipidation. Cys-24 is lipidated: S-diacylglycerol cysteine.

Belongs to the bacterial solute-binding protein SsuA/TauA family.

Its subcellular location is the cell membrane. The sequence is that of Putative binding protein YtlA (ytlA) from Bacillus subtilis (strain 168).